The primary structure comprises 436 residues: Serine--tRNA ligase (436 aa).

Threonine 242 to glutamate 244 contacts L-serine. An ATP-binding site is contributed by arginine 273–glutamate 275. Glutamate 296 is an L-serine binding site. Position 360–363 (glutamate 360–serine 363) interacts with ATP. Serine 395 serves as a coordination point for L-serine.

The protein belongs to the class-II aminoacyl-tRNA synthetase family. Type-1 seryl-tRNA synthetase subfamily. Homodimer. The tRNA molecule binds across the dimer.

It localises to the cytoplasm. It carries out the reaction tRNA(Ser) + L-serine + ATP = L-seryl-tRNA(Ser) + AMP + diphosphate + H(+). The enzyme catalyses tRNA(Sec) + L-serine + ATP = L-seryl-tRNA(Sec) + AMP + diphosphate + H(+). It functions in the pathway aminoacyl-tRNA biosynthesis; selenocysteinyl-tRNA(Sec) biosynthesis; L-seryl-tRNA(Sec) from L-serine and tRNA(Sec): step 1/1. Its function is as follows. Catalyzes the attachment of serine to tRNA(Ser). Is also able to aminoacylate tRNA(Sec) with serine, to form the misacylated tRNA L-seryl-tRNA(Sec), which will be further converted into selenocysteinyl-tRNA(Sec). This is Serine--tRNA ligase from Polynucleobacter asymbioticus (strain DSM 18221 / CIP 109841 / QLW-P1DMWA-1) (Polynucleobacter necessarius subsp. asymbioticus).